A 384-amino-acid polypeptide reads, in one-letter code: Fructose-1,6-bisphosphate aldolase/phosphatase (384 aa).

Residue aspartate 11 is the Proton acceptor; for FBP phosphatase activity of the active site. Mg(2+)-binding residues include aspartate 11, histidine 18, aspartate 52, and aspartate 53. A beta-D-fructose 1,6-bisphosphate-binding site is contributed by histidine 18. Position 18 (histidine 18) interacts with dihydroxyacetone phosphate. Tyrosine 90 contacts beta-D-fructose 1,6-bisphosphate. Glutamine 94 serves as a coordination point for Mg(2+). Residue 103–104 (GN) participates in beta-D-fructose 1,6-bisphosphate binding. Aspartate 131 lines the Mg(2+) pocket. A beta-D-fructose 1,6-bisphosphate-binding site is contributed by lysine 132. Lysine 132 is a dihydroxyacetone phosphate binding site. The active-site Proton donor/acceptor; for FBP aldolase activity is tyrosine 228. 3 residues coordinate Mg(2+): lysine 231, aspartate 232, and aspartate 233. Catalysis depends on lysine 231, which acts as the Schiff-base intermediate with DHAP; for FBP aldolase activity. Beta-D-fructose 1,6-bisphosphate contacts are provided by residues 241 to 242 (QH), arginine 265, aspartate 286, and tyrosine 347. Dihydroxyacetone phosphate is bound by residues arginine 265 and aspartate 286.

It belongs to the FBP aldolase/phosphatase family. Homooctamer; dimer of tetramers. Mg(2+) is required as a cofactor.

The catalysed reaction is beta-D-fructose 1,6-bisphosphate + H2O = beta-D-fructose 6-phosphate + phosphate. The enzyme catalyses beta-D-fructose 1,6-bisphosphate = D-glyceraldehyde 3-phosphate + dihydroxyacetone phosphate. The protein operates within carbohydrate biosynthesis; gluconeogenesis. Functionally, catalyzes two subsequent steps in gluconeogenesis: the aldol condensation of dihydroxyacetone phosphate (DHAP) and glyceraldehyde-3-phosphate (GA3P) to fructose-1,6-bisphosphate (FBP), and the dephosphorylation of FBP to fructose-6-phosphate (F6P). This is Fructose-1,6-bisphosphate aldolase/phosphatase from Sulfurisphaera tokodaii (strain DSM 16993 / JCM 10545 / NBRC 100140 / 7) (Sulfolobus tokodaii).